Consider the following 205-residue polypeptide: Outer-membrane lipoprotein LolB (205 aa).

The first 17 residues, 1-17, serve as a signal peptide directing secretion; that stretch reads MFLRHVIVFSLIALLTG. Cys-18 carries N-palmitoyl cysteine lipidation. Cys-18 is lipidated: S-diacylglycerol cysteine.

Belongs to the LolB family. As to quaternary structure, monomer.

It is found in the cell outer membrane. Functionally, plays a critical role in the incorporation of lipoproteins in the outer membrane after they are released by the LolA protein. This chain is Outer-membrane lipoprotein LolB, found in Pseudomonas syringae pv. syringae (strain B728a).